Here is a 197-residue protein sequence, read N- to C-terminus: Ion-translocating oxidoreductase complex subunit B (197 aa).

Positions 1-26 (MSTILIAIIALAALAAVFGAILGFAS) are hydrophobic. The region spanning 32 to 90 (EADPIVDQIDSILPQTQCGQCGYPGCRPYAEAIANGDQINKCPPGGQATIEKLADLMGV) is the 4Fe-4S domain. Positions 49, 52, 57, 73, 114, 117, 120, 124, 144, 147, 150, and 154 each coordinate [4Fe-4S] cluster. 4Fe-4S ferredoxin-type domains are found at residues 105 to 134 (TVAFIHEDMCIGCTKCIQACPVDAIVGGTK) and 135 to 164 (ALHTVIKDECTGCDLCVAPCPTDCIEMIPV).

Belongs to the 4Fe4S bacterial-type ferredoxin family. RnfB subfamily. In terms of assembly, the complex is composed of six subunits: RnfA, RnfB, RnfC, RnfD, RnfE and RnfG. The cofactor is [4Fe-4S] cluster.

The protein resides in the cell inner membrane. In terms of biological role, part of a membrane-bound complex that couples electron transfer with translocation of ions across the membrane. The sequence is that of Ion-translocating oxidoreductase complex subunit B from Vibrio campbellii (strain ATCC BAA-1116).